Consider the following 136-residue polypeptide: Large ribosomal subunit protein uL16 (136 aa).

It belongs to the universal ribosomal protein uL16 family. In terms of assembly, part of the 50S ribosomal subunit.

In terms of biological role, binds 23S rRNA and is also seen to make contacts with the A and possibly P site tRNAs. The protein is Large ribosomal subunit protein uL16 of Mannheimia succiniciproducens (strain KCTC 0769BP / MBEL55E).